The following is a 371-amino-acid chain: MYDFAIIGSGVAGATLAKELRYRYKVAVIEKGKKPSYASEGKNVEINYVYGLGGSGVYSLGNAIKTEIKGYKIDKDIYKEIWEELKIKAPKDDFLNDIDKAFIELGFEKMEKFIDFDRCNKCGECARKICKAKWTPLNYLKESNANIITEFNIKAINYSNYYEILDDKGRKIKAKNLIISAGGINSPRILKKMIDDENIGKNLFIDTFVTVGGILEDSYLNKDISMLVYKKYKNFMLATHYSKLLINEIKKDYKDVKEKDIVGIMIKIKDENNGVVLDNDVKKEITKEDFKTLARGICKATKYLYKLGVDDIYTTIPRGSHPGGSLSLVVDEFEVREGLYVCDASLFKEALGVPPIVSIIALSKKFVREIL.

The 4Fe-4S ferredoxin-type domain maps to 110 to 140 (MEKFIDFDRCNKCGECARKICKAKWTPLNYL).

This is an uncharacterized protein from Methanocaldococcus jannaschii (strain ATCC 43067 / DSM 2661 / JAL-1 / JCM 10045 / NBRC 100440) (Methanococcus jannaschii).